We begin with the raw amino-acid sequence, 102 residues long: Small ribosomal subunit protein uS10 (102 aa).

This sequence belongs to the universal ribosomal protein uS10 family. As to quaternary structure, part of the 30S ribosomal subunit.

Functionally, involved in the binding of tRNA to the ribosomes. In Streptococcus thermophilus (strain ATCC BAA-491 / LMD-9), this protein is Small ribosomal subunit protein uS10.